A 280-amino-acid chain; its full sequence is Apoptosis regulator ced-9 (280 aa).

The tract at residues 33–59 (GTEPTDFGINSDAQDLPSPSRQASTRR) is disordered. Residues 43–59 (SDAQDLPSPSRQASTRR) are compositionally biased toward polar residues. The BH4 signature appears at 80-99 (IEGFVVDYFTHRIRQNGMEW). Positions 160–179 (QTDQCPMSYGRLIGLISFGG) match the BH1 motif. Residues 213 to 229 (NWKEHNRSWDDFMTLGK) carry the BH2 motif.

The protein belongs to the Bcl-2 family. As to quaternary structure, interacts with asymmetric homodimer ced-4; the interaction sequesters ced-4. Interacts with egl-1; the interaction results in ced-4 release. Interacts with dre-1; the interaction inhibits ced-9 activity, either directly or indirectly. Interacts with dct-1. May form a complex composed of ced-9, ced-4 and mac-1. Interacts with dynamin-related protein drp-1 (via residues 280-502); the interaction is enhanced by GTP rather than GDP; the interaction is probably direct and may occur at the mitochondrion. Interaction with drp-1 may be enhanced by interaction of ced-9 with egl-1, but not with ced-4. A ced-9/egl-1 complex may recruit drp-1 to the mitochondrial surface. Interacts with fzo-1; interaction may be suppressed by interaction of ced-9 with egl-1.

It localises to the perikaryon. The protein resides in the synapse. It is found in the endomembrane system. Its subcellular location is the mitochondrion membrane. The protein localises to the cytoplasm. Functionally, plays a major role in programmed cell death (PCD, apoptosis). egl-1 binds to and directly inhibits the activity of ced-9, releasing the cell death activator ced-4 from a ced-9/ced-4 containing protein complex and allowing ced-4 to activate the cell-killing caspase ced-3. During larval development, required for the elimination of transient presynaptic components downstream of egl-1 and upstream of ced-4 and ced-3 apoptotic pathway. Has been shown in one study to be dispensable in mitochondrial dynamics and morphology during early embryonic development. However, another study shows that a egl-1/ced-9 containing complex may promote drp-1-dependent mitochondrial fission. The sequence is that of Apoptosis regulator ced-9 (ced-9) from Caenorhabditis elegans.